The chain runs to 378 residues: SWI/SNF-related matrix-associated actin-dependent regulator of chromatin subfamily B member 1 (378 aa).

Residues 1 to 106 (MIMALSKTFG…DEKYKAVSIS (106 aa)) are DNA-binding.

Belongs to the SNF5 family. In terms of assembly, component of the multiprotein chromatin-remodeling complexes SWI/SNF. Component of neural progenitors-specific chromatin remodeling complex (npBAF complex) and the neuron-specific chromatin remodeling complex (nBAF complex). Component of the BAF (SWI/SNF) chromatin remodeling complex. Component of the SWI/SNF-B (PBAF) chromatin remodeling complex. Binds to double-stranded DNA.

The protein localises to the nucleus. In terms of biological role, involved in chromatin-remodeling. Core component of the BAF (SWI/SNF) complex. This ATP-dependent chromatin-remodeling complex plays important roles in cell proliferation and differentiation, in cellular antiviral activities and inhibition of tumor formation. Belongs to the neural progenitors-specific chromatin remodeling complex (npBAF complex) and the neuron-specific chromatin remodeling complex (nBAF complex) and may play a role in neural development. The sequence is that of SWI/SNF-related matrix-associated actin-dependent regulator of chromatin subfamily B member 1 (smarcb1) from Xenopus tropicalis (Western clawed frog).